Reading from the N-terminus, the 356-residue chain is S-adenosylmethionine:tRNA ribosyltransferase-isomerase (356 aa).

This sequence belongs to the QueA family. In terms of assembly, monomer.

It localises to the cytoplasm. It carries out the reaction 7-aminomethyl-7-carbaguanosine(34) in tRNA + S-adenosyl-L-methionine = epoxyqueuosine(34) in tRNA + adenine + L-methionine + 2 H(+). It functions in the pathway tRNA modification; tRNA-queuosine biosynthesis. Its function is as follows. Transfers and isomerizes the ribose moiety from AdoMet to the 7-aminomethyl group of 7-deazaguanine (preQ1-tRNA) to give epoxyqueuosine (oQ-tRNA). The protein is S-adenosylmethionine:tRNA ribosyltransferase-isomerase of Escherichia coli O81 (strain ED1a).